Consider the following 127-residue polypeptide: Small ribosomal subunit protein bS6 (127 aa).

It belongs to the bacterial ribosomal protein bS6 family.

In terms of biological role, binds together with bS18 to 16S ribosomal RNA. This is Small ribosomal subunit protein bS6 from Acinetobacter baumannii (strain AB0057).